A 595-amino-acid chain; its full sequence is Putative histone-lysine N-methyltransferase PRDM6 (595 aa).

The tract at residues 27 to 90 (FPHGGAGPLK…STPASSSTSA (64 aa)) is disordered. Residues 30–40 (GGAGPLKGSGA) are compositionally biased toward gly residues. Positions 49-59 (PLQPPPPPPPP) are enriched in pro residues. The segment covering 71-90 (PRPASLSSASSTPASSSTSA) has biased composition (low complexity). The SET domain maps to 246–365 (REVCLCTSTV…RGTELLVWYN (120 aa)). The C2H2-type 1; degenerate zinc-finger motif lies at 473–495 (WKCGQCFKTFTQRILLQMHVCTQ). C2H2-type zinc fingers lie at residues 501–523 (YQCG…VVTH) and 529–551 (FKCG…IRTH). Residues 557–579 (FKCERCERSFTQATQLSRHQRMP) form a C2H2-type 4; degenerate zinc finger.

Belongs to the class V-like SAM-binding methyltransferase superfamily. Interacts with HDAC1, HDAC2, HDAC3, CBX1 and EP300.

The protein resides in the nucleus. It carries out the reaction L-lysyl(20)-[histone H4] + S-adenosyl-L-methionine = N(6)-methyl-L-lysyl(20)-[histone H4] + S-adenosyl-L-homocysteine + H(+). Its function is as follows. Putative histone methyltransferase that acts as a transcriptional repressor of smooth muscle gene expression. Promotes the transition from differentiated to proliferative smooth muscle by suppressing differentiation and maintaining the proliferative potential of vascular smooth muscle cells. Also plays a role in endothelial cells by inhibiting endothelial cell proliferation, survival and differentiation. It is unclear whether it has histone methyltransferase activity in vivo. According to some authors, it does not act as a histone methyltransferase by itself and represses transcription by recruiting EHMT2/G9a. According to others, it possesses histone methyltransferase activity when associated with other proteins and specifically methylates 'Lys-20' of histone H4 in vitro. 'Lys-20' methylation represents a specific tag for epigenetic transcriptional repression. This chain is Putative histone-lysine N-methyltransferase PRDM6 (PRDM6), found in Homo sapiens (Human).